The chain runs to 356 residues: DNA integrity scanning protein DisA (356 aa).

The DAC domain occupies 7-147 (NKNMLYALKM…EKYVVEDISK (141 aa)). Residues glycine 74, leucine 92, and 105–109 (TRHRT) contribute to the ATP site.

It belongs to the DisA family. In terms of assembly, homooctamer. Requires Mg(2+) as cofactor.

The catalysed reaction is 2 ATP = 3',3'-c-di-AMP + 2 diphosphate. Functionally, participates in a DNA-damage check-point that is active prior to asymmetric division when DNA is damaged. DisA forms globular foci that rapidly scan along the chromosomes during sporulation, searching for lesions. When a lesion is present, DisA pauses at the lesion site. This triggers a cellular response that culminates in a temporary block in sporulation initiation. In terms of biological role, also has diadenylate cyclase activity, catalyzing the condensation of 2 ATP molecules into cyclic di-AMP (c-di-AMP). c-di-AMP acts as a signaling molecule that couples DNA integrity with progression of sporulation. The rise in c-di-AMP level generated by DisA while scanning the chromosome, operates as a positive signal that advances sporulation; upon encountering a lesion, the DisA focus arrests at the damaged site and halts c-di-AMP synthesis. The sequence is that of DNA integrity scanning protein DisA from Clostridioides difficile (strain 630) (Peptoclostridium difficile).